Reading from the N-terminus, the 334-residue chain is Thioredoxin reductase (334 aa).

FAD-binding positions include 11-14, 40-41, Gln-45, Asn-54, Cys-148, Asp-294, and 301-303; these read SGAG, TA, and RQA. Cys-145 and Cys-148 are disulfide-bonded.

This sequence belongs to the class-II pyridine nucleotide-disulfide oxidoreductase family. As to quaternary structure, homodimer. It depends on FAD as a cofactor.

It catalyses the reaction [thioredoxin]-dithiol + NADP(+) = [thioredoxin]-disulfide + NADPH + H(+). Its function is as follows. Component of the thioredoxin-thioredoxin reductase system which may be involved in biosynthesis of penicillins and cephalosporins and may be important in determining the thiol-disulfide redox balance. The sequence is that of Thioredoxin reductase (TRR1) from Penicillium chrysogenum (Penicillium notatum).